The following is a 542-amino-acid chain: MLO-like protein 7 (542 aa).

Residues 1-38 (MITRSRCRRSLLWFLVFHGGATATGAPSGGKELSQTPT) lie on the Extracellular side of the membrane. A helical membrane pass occupies residues 39-59 (WAVAVVCTFLILISHLLEKGL). The Cytoplasmic portion of the chain corresponds to 60–82 (QRLANWLWKKHKNSLLEALEKIK). A helical transmembrane segment spans residues 83 to 103 (AELMILGFISLLLTFGEPYIL). At 104 to 165 (KICVPRKAAL…ITLKGLHQLH (62 aa)) the chain is on the extracellular side. Residues 166–186 (ILLFFLAIFHIVYSLITMMLS) form a helical membrane-spanning segment. The Cytoplasmic portion of the chain corresponds to 187-288 (RLKIRGWKKW…IKRSLEDDFK (102 aa)). A helical membrane pass occupies residues 289 to 309 (LVVGISPVLWASFVIFLLFNV). Topologically, residues 310–315 (NGWRTL) are extracellular. The chain crosses the membrane as a helical span at residues 316–336 (FWASIPPLLIILAVGTKLQAI). Over 337 to 374 (MATMALEIVETHAVVQGMPLVQGSDRYFWFDCPQLLLH) the chain is Cytoplasmic. A helical transmembrane segment spans residues 375 to 395 (LIHFALFQNAFQITHFFWIWY). Residues 396-414 (SFGLKSCFHKDFNLVVSKL) are Extracellular-facing. The helical transmembrane segment at 415–435 (FLCLGALILCSYITLPLYALV) threads the bilayer. Over 436 to 542 (TQMGSHMKKA…QQQEMQFHNS (107 aa)) the chain is Cytoplasmic. Residues 449 to 470 (EQMAKALKKWHKDIKLKKGKAR) form a calmodulin-binding region.

Belongs to the MLO family. Restricted to pollen, synergids, pistils and immature anthers. Also detected in seedlings, leaves, stems and inflorescens.

The protein resides in the cell membrane. Its subcellular location is the endomembrane system. Its function is as follows. May be involved in modulation of pathogen defense and leaf cell death. Activity seems to be regulated by Ca(2+)-dependent calmodulin binding and seems not to require heterotrimeric G proteins. Controls pollen tube reception in the female gametophyte synergids. The sequence is that of MLO-like protein 7 (MLO7) from Arabidopsis thaliana (Mouse-ear cress).